The sequence spans 241 residues: Copper transport protein CTR3 (241 aa).

The Lumenal portion of the chain corresponds to 1-41; sequence MNMGGSSSTAAKKATCKISMLWNWYTIDTCFIARSWRNDTK. Residues 42 to 62 traverse the membrane as a helical segment; that stretch reads GKFAGSCIGCFALVVVAQWLT. Residues 63–159 lie on the Cytoplasmic side of the membrane; the sequence is RFSRQFDVEL…SCCTLITPVD (97 aa). The chain crosses the membrane as a helical span at residues 160–180; sequence LYPTFLDHMIRVTIFVLQWGL. The Lumenal portion of the chain corresponds to 181 to 182; the sequence is SY. The helical transmembrane segment at 183-203 threads the bilayer; the sequence is IIMLLFMYYNGYIIISCLIGA. Over 204-241 the chain is Cytoplasmic; that stretch reads IVGRFIFCYEPLGSLGANGSAQGTVSYDKESDDRKCCL.

Belongs to the copper transporter (Ctr) (TC 1.A.56) family. SLC31A subfamily.

The protein resides in the cytoplasmic vesicle membrane. In terms of biological role, required for high affinity copper (probably reduced Cu I) transport into the cell. This Saccharomyces cerevisiae (strain ATCC 204508 / S288c) (Baker's yeast) protein is Copper transport protein CTR3 (CTR3).